The following is a 434-amino-acid chain: Adenylosuccinate synthetase (434 aa).

Residues 25-31 (GDEGKGK) and 53-55 (GHT) contribute to the GTP site. Residue aspartate 26 is the Proton acceptor of the active site. Residues aspartate 26 and glycine 53 each contribute to the Mg(2+) site. IMP is bound by residues 26 to 29 (DEGK), 51 to 54 (NAGH), threonine 142, arginine 156, asparagine 233, threonine 248, and arginine 312. Histidine 54 serves as the catalytic Proton donor. Position 308-314 (308-314 (VTTGRKR)) interacts with substrate. GTP-binding positions include arginine 314, 340-342 (KLD), and 422-424 (GVG).

The protein belongs to the adenylosuccinate synthetase family. Homodimer. Requires Mg(2+) as cofactor.

It localises to the cytoplasm. The catalysed reaction is IMP + L-aspartate + GTP = N(6)-(1,2-dicarboxyethyl)-AMP + GDP + phosphate + 2 H(+). It participates in purine metabolism; AMP biosynthesis via de novo pathway; AMP from IMP: step 1/2. With respect to regulation, competitively Inhibited by GMP. Allosterically inhibited by AMP. In terms of biological role, plays an important role in the de novo pathway and in the salvage pathway of purine nucleotide biosynthesis. Catalyzes the first committed step in the biosynthesis of AMP from IMP. This Schizosaccharomyces pombe (strain 972 / ATCC 24843) (Fission yeast) protein is Adenylosuccinate synthetase (ade2).